The chain runs to 624 residues: DNA (cytosine-5)-methyltransferase DRM1 (624 aa).

UBA domains follow at residues 57 to 100 (RISD…LFNY) and 108 to 149 (SSKS…LLTY). A disordered region spans residues 160–189 (DMNININDDDDDNLYSLSSDDEEDELNNSS). Over residues 166-185 (NDDDDDNLYSLSSDDEEDEL) the composition is skewed to acidic residues. One can recognise a UBA 3 domain in the interval 188–231 (SSNEDRILQALIKMGYLREDAAIAIERCGEDASMEEVVDFICAA). The region spanning 291–622 (MHRPVPIPDI…EAVRRKARHM (332 aa)) is the SAM-dependent MTase DRM-type domain.

The protein belongs to the class I-like SAM-binding methyltransferase superfamily. DRM-methyltransferase family.

Its subcellular location is the nucleus. The catalysed reaction is a 2'-deoxycytidine in DNA + S-adenosyl-L-methionine = a 5-methyl-2'-deoxycytidine in DNA + S-adenosyl-L-homocysteine + H(+). In terms of biological role, involved in de novo DNA methylation. Controls asymmetric and CpNpG methylation. Required for FWA gene silencing but not for the maintenance of SUP gene silencing. Functionally redundant to CMT3 to maintain non-CpG methylation. Involved in RNA-directed DNA methylation. The protein is DNA (cytosine-5)-methyltransferase DRM1 (DRM1) of Arabidopsis thaliana (Mouse-ear cress).